The sequence spans 212 residues: Phosphatidylserine decarboxylase proenzyme (212 aa).

The active-site Schiff-base intermediate with substrate; via pyruvic acid is Ser-182. Ser-182 bears the Pyruvic acid (Ser); by autocatalysis mark.

This sequence belongs to the phosphatidylserine decarboxylase family. PSD-A subfamily. As to quaternary structure, heterodimer of a large membrane-associated beta subunit and a small pyruvoyl-containing alpha subunit. Pyruvate is required as a cofactor. Is synthesized initially as an inactive proenzyme. Formation of the active enzyme involves a self-maturation process in which the active site pyruvoyl group is generated from an internal serine residue via an autocatalytic post-translational modification. Two non-identical subunits are generated from the proenzyme in this reaction, and the pyruvate is formed at the N-terminus of the alpha chain, which is derived from the carboxyl end of the proenzyme. The post-translation cleavage follows an unusual pathway, termed non-hydrolytic serinolysis, in which the side chain hydroxyl group of the serine supplies its oxygen atom to form the C-terminus of the beta chain, while the remainder of the serine residue undergoes an oxidative deamination to produce ammonia and the pyruvoyl prosthetic group on the alpha chain.

Its subcellular location is the cell membrane. It catalyses the reaction a 1,2-diacyl-sn-glycero-3-phospho-L-serine + H(+) = a 1,2-diacyl-sn-glycero-3-phosphoethanolamine + CO2. It functions in the pathway phospholipid metabolism; phosphatidylethanolamine biosynthesis; phosphatidylethanolamine from CDP-diacylglycerol: step 2/2. In terms of biological role, catalyzes the formation of phosphatidylethanolamine (PtdEtn) from phosphatidylserine (PtdSer). The protein is Phosphatidylserine decarboxylase proenzyme of Chlorobium limicola (strain DSM 245 / NBRC 103803 / 6330).